The chain runs to 347 residues: CRISPR-associated endonuclease Cas1 4 (347 aa).

Residues 1 to 21 show a composition bias toward basic and acidic residues; that stretch reads MNIENEVHIENASESKREPKP. A disordered region spans residues 1–25; that stretch reads MNIENEVHIENASESKREPKPPEGL. Positions 176, 241, and 256 each coordinate Mn(2+).

It belongs to the CRISPR-associated endonuclease Cas1 family. In terms of assembly, homodimer, forms a heterotetramer with a Cas2 homodimer. Mg(2+) serves as cofactor. It depends on Mn(2+) as a cofactor.

CRISPR (clustered regularly interspaced short palindromic repeat), is an adaptive immune system that provides protection against mobile genetic elements (viruses, transposable elements and conjugative plasmids). CRISPR clusters contain spacers, sequences complementary to antecedent mobile elements, and target invading nucleic acids. CRISPR clusters are transcribed and processed into CRISPR RNA (crRNA). Acts as a dsDNA endonuclease. Involved in the integration of spacer DNA into the CRISPR cassette. The protein is CRISPR-associated endonuclease Cas1 4 of Methanospirillum hungatei JF-1 (strain ATCC 27890 / DSM 864 / NBRC 100397 / JF-1).